We begin with the raw amino-acid sequence, 479 residues long: Adenosylhomocysteinase (479 aa).

Substrate-binding residues include Thr66, Asp142, and Glu203. 204 to 206 (TTT) contributes to the NAD(+) binding site. Lys233 and Asp237 together coordinate substrate. NAD(+) is bound by residues Asn238, 267–272 (GYGDVG), Glu290, Asn325, 346–348 (IGH), and Asn394.

The protein belongs to the adenosylhomocysteinase family. Requires NAD(+) as cofactor.

It is found in the cytoplasm. The catalysed reaction is S-adenosyl-L-homocysteine + H2O = L-homocysteine + adenosine. It participates in amino-acid biosynthesis; L-homocysteine biosynthesis; L-homocysteine from S-adenosyl-L-homocysteine: step 1/1. May play a key role in the regulation of the intracellular concentration of adenosylhomocysteine. This Oleidesulfovibrio alaskensis (strain ATCC BAA-1058 / DSM 17464 / G20) (Desulfovibrio alaskensis) protein is Adenosylhomocysteinase.